Reading from the N-terminus, the 528-residue chain is MGSIGSQRLKEPCVAATSDQSVVTSFSFDNFQLETTAEGAQDPGIRVRGVPTFTDSAVEEPVPDDRYHAIYFAMLLAGVGFLLPYNSFITDVDYLHHKYPGTSIVFDMSLTYILVALAAVLLNNVVVERLNLHTRITTGYLLALGPLLFISICDVWLQLFSHDQAYAINLAAVGTVAFGCTVQQSSFYGYTGLLPKRYTQGVMTGESTAGVMISLSRILTKLLLPDERASTIIFFLVSAGLELLCFLLHLLVRRSRFVLYYTTRPRDSRPVQAGYRVHHDVASGDIHFEHQTPALSSSRSPKESPAHEVTHSNSGVYMRFDVPRPRVKRSWPTFRALLLHRYVVARVIWADMLSIAVTYFITLCLFPGLESEIRHCVLGEWLPILVMAVFNLSDFVGKILAALPVEWRGTHLLACSCLRVVFIPLFILCVYPSGMPALRHPAWPCVFSLLMGISNGYFGSVPMILAAGKVSPKQRELAGNTMTVSYMSGLTLGSAVAYCTYSLTRDAHGSCFQTATAAAANDSIPVGP.

Topologically, residues 1 to 68 (MGSIGSQRLK…EEPVPDDRYH (68 aa)) are extracellular. A helical membrane pass occupies residues 69–89 (AIYFAMLLAGVGFLLPYNSFI). At 90 to 101 (TDVDYLHHKYPG) the chain is on the cytoplasmic side. A helical membrane pass occupies residues 102–122 (TSIVFDMSLTYILVALAAVLL). At 123-139 (NNVVVERLNLHTRITTG) the chain is on the extracellular side. A helical membrane pass occupies residues 140–160 (YLLALGPLLFISICDVWLQLF). Over 161 to 166 (SHDQAY) the chain is Cytoplasmic. The helical transmembrane segment at 167–187 (AINLAAVGTVAFGCTVQQSSF) threads the bilayer. At 188-231 (YGYTGLLPKRYTQGVMTGESTAGVMISLSRILTKLLLPDERAST) the chain is on the extracellular side. Residues 232-252 (IIFFLVSAGLELLCFLLHLLV) form a helical membrane-spanning segment. Residues 253 to 346 (RRSRFVLYYT…LLLHRYVVAR (94 aa)) lie on the Cytoplasmic side of the membrane. A helical transmembrane segment spans residues 347–367 (VIWADMLSIAVTYFITLCLFP). The Extracellular portion of the chain corresponds to 368–376 (GLESEIRHC). The chain crosses the membrane as a helical span at residues 377–397 (VLGEWLPILVMAVFNLSDFVG). The Cytoplasmic segment spans residues 398 to 411 (KILAALPVEWRGTH). The chain crosses the membrane as a helical span at residues 412-432 (LLACSCLRVVFIPLFILCVYP). At 433–445 (SGMPALRHPAWPC) the chain is on the extracellular side. The chain crosses the membrane as a helical span at residues 446–466 (VFSLLMGISNGYFGSVPMILA). The Cytoplasmic portion of the chain corresponds to 467 to 481 (AGKVSPKQRELAGNT). Residues 482–504 (MTVSYMSGLTLGSAVAYCTYSLT) form a helical membrane-spanning segment. Residues 505-528 (RDAHGSCFQTATAAAANDSIPVGP) are Extracellular-facing. Asn-521 carries an N-linked (GlcNAc...) asparagine glycan.

This sequence belongs to the SLC29A/ENT transporter (TC 2.A.57) family. In terms of processing, N-glycosylated. Expressed in heart. Expressed in choroid plexus.

It localises to the cell membrane. The protein localises to the apical cell membrane. It carries out the reaction serotonin(out) = serotonin(in). The catalysed reaction is dopamine(out) = dopamine(in). The enzyme catalyses (R)-noradrenaline(out) = (R)-noradrenaline(in). It catalyses the reaction (R)-adrenaline(out) = (R)-adrenaline(in). It carries out the reaction histamine(out) = histamine(in). The catalysed reaction is tyramine(in) = tyramine(out). The enzyme catalyses guanidine(out) = guanidine(in). It catalyses the reaction adenine(out) = adenine(in). It carries out the reaction adenosine(in) = adenosine(out). Activated at acidic pH. Functionally, electrogenic voltage-dependent transporter that mediates the transport of a variety of endogenous bioactive amines, cationic xenobiotics and drugs. Utilizes the physiologic inside-negative membrane potential as a driving force to facilitate cellular uptake of organic cations. Functions as a Na(+)- and Cl(-)-independent bidirectional transporter. Substrate transport is pH-dependent and enhanced under acidic condition, which is most likely the result of allosteric changes in the transporter structure. Implicated in monoamine neurotransmitters uptake such as serotonin, dopamine, adrenaline/epinephrine, noradrenaline/norepinephrine, histamine and tyramine, thereby supporting a role in homeostatic regulation of aminergic neurotransmission in the central nervous system. Also responsible for the uptake of bioactive amines and drugs through the blood-cerebrospinal fluid (CSF) barrier, from the CSF into choroid plexus epithelial cells, thereby playing a significant role in the clearance of cationic neurotoxins, xenobiotics and metabolic waste in the brain. Involved in bidirectional transport of the purine nucleoside adenosine and plays a role in the regulation of extracellular adenosine concentrations in cardiac tissues, in particular during ischemia. May be involved in organic cation uptake from the tubular lumen into renal tubular cells, thereby contributing to organic cation reabsorption in the kidney. Also transports adenine and guanidine. The chain is Equilibrative nucleoside transporter 4 from Mus musculus (Mouse).